A 208-amino-acid chain; its full sequence is MARYTGPSCRLCRRENMELFLKGDRCYTDKCAIKRRNYPPGQHGQGRTKNSAYGIQLREKQKVRRIYGLMENQFRGYFAEADRMKGVTGENLLSLLERRLDNVVYRLGFASSRSESRQLVRHGHFTLNGKKVDIPSIQTRVGDVIELREKSRKIVSINDALDAVARRGIPQWLELDRDAFKGNLKALPVREDVTTPIQEQLVVELYSK.

Residues 98–159 (RRLDNVVYRL…KSRKIVSIND (62 aa)) form the S4 RNA-binding domain.

This sequence belongs to the universal ribosomal protein uS4 family. In terms of assembly, part of the 30S ribosomal subunit. Contacts protein S5. The interaction surface between S4 and S5 is involved in control of translational fidelity.

Functionally, one of the primary rRNA binding proteins, it binds directly to 16S rRNA where it nucleates assembly of the body of the 30S subunit. With S5 and S12 plays an important role in translational accuracy. This chain is Small ribosomal subunit protein uS4, found in Pelobacter propionicus (strain DSM 2379 / NBRC 103807 / OttBd1).